The primary structure comprises 451 residues: Chromosomal replication initiator protein DnaA (451 aa).

The domain I, interacts with DnaA modulators stretch occupies residues 1-71 (MSEKEIWDKV…QAIIYDVIGY (71 aa)). A domain II region spans residues 71-112 (YEVKPHFISEDELASYNNVNTQEVQEPQVQHSSIDDKTWGKE). The segment at 113-329 (QFNMHNTFDT…GALTRLLAYS (217 aa)) is domain III, AAA+ region. Residues G157, G159, K160, and T161 each contribute to the ATP site. The tract at residues 330-451 (KLQGKPITTE…ENLEKEIRNQ (122 aa)) is domain IV, binds dsDNA.

It belongs to the DnaA family. In terms of assembly, oligomerizes as a right-handed, spiral filament on DNA at oriC.

It is found in the cytoplasm. Functionally, plays an essential role in the initiation and regulation of chromosomal replication. ATP-DnaA binds to the origin of replication (oriC) to initiate formation of the DNA replication initiation complex once per cell cycle. Binds the DnaA box (a 9 base pair repeat at the origin) and separates the double-stranded (ds)DNA. Forms a right-handed helical filament on oriC DNA; dsDNA binds to the exterior of the filament while single-stranded (ss)DNA is stabiized in the filament's interior. The ATP-DnaA-oriC complex binds and stabilizes one strand of the AT-rich DNA unwinding element (DUE), permitting loading of DNA polymerase. After initiation quickly degrades to an ADP-DnaA complex that is not apt for DNA replication. Binds acidic phospholipids. The polypeptide is Chromosomal replication initiator protein DnaA (Staphylococcus epidermidis (strain ATCC 12228 / FDA PCI 1200)).